The sequence spans 218 residues: 5-oxoprolinase subunit B (218 aa).

The protein belongs to the PxpB family. Forms a complex composed of PxpA, PxpB and PxpC.

The catalysed reaction is 5-oxo-L-proline + ATP + 2 H2O = L-glutamate + ADP + phosphate + H(+). Its function is as follows. Catalyzes the cleavage of 5-oxoproline to form L-glutamate coupled to the hydrolysis of ATP to ADP and inorganic phosphate. In Escherichia coli O157:H7, this protein is 5-oxoprolinase subunit B.